A 768-amino-acid chain; its full sequence is Calcium up-regulated protein G (768 aa).

A disordered region spans residues M1–T22. 2 consecutive Ricin B-type lectin domains span residues M1–D107 and K100–N248.

This sequence belongs to the cup family.

It is found in the cytoplasm. It localises to the membrane. Functionally, may play an important role in stabilizing and/or regulating the cell membrane during Ca(2+) stress or certain stages of development. In Dictyostelium discoideum (Social amoeba), this protein is Calcium up-regulated protein G (cupG).